Reading from the N-terminus, the 40-residue chain is Photosystem II reaction center protein J (40 aa).

A helical membrane pass occupies residues 8–28; that stretch reads IPLWLIGTVAGIPVIGSVGVF.

Belongs to the PsbJ family. PSII is composed of 1 copy each of membrane proteins PsbA, PsbB, PsbC, PsbD, PsbE, PsbF, PsbH, PsbI, PsbJ, PsbK, PsbL, PsbM, PsbT, PsbX, PsbY, PsbZ, Psb30/Ycf12, at least 3 peripheral proteins of the oxygen-evolving complex and a large number of cofactors. It forms dimeric complexes.

It is found in the plastid. Its subcellular location is the chloroplast thylakoid membrane. Functionally, one of the components of the core complex of photosystem II (PSII). PSII is a light-driven water:plastoquinone oxidoreductase that uses light energy to abstract electrons from H(2)O, generating O(2) and a proton gradient subsequently used for ATP formation. It consists of a core antenna complex that captures photons, and an electron transfer chain that converts photonic excitation into a charge separation. The protein is Photosystem II reaction center protein J of Acorus calamus (Sweet flag).